A 636-amino-acid polypeptide reads, in one-letter code: NADP-dependent malic enzyme, chloroplastic (636 aa).

The segment at Met-1–Gly-28 is disordered. The N-terminal 62 residues, Met-1–Ala-62, are a transit peptide targeting the chloroplast. The segment covering Ala-7–Pro-18 has biased composition (low complexity). Tyr-184 functions as the Proton donor in the catalytic mechanism. Residue Arg-237 coordinates NAD(+). Lys-255 serves as the catalytic Proton acceptor. Glu-327, Asp-328, and Asp-351 together coordinate a divalent metal cation. Asp-351 is an NAD(+) binding site. Leu-380 to Ala-396 is an NADP(+) binding site. Asn-492 contacts NAD(+).

It belongs to the malic enzymes family. As to quaternary structure, homotetramer. Mg(2+) is required as a cofactor. It depends on Mn(2+) as a cofactor.

The protein resides in the plastid. The protein localises to the chloroplast. It carries out the reaction (S)-malate + NADP(+) = pyruvate + CO2 + NADPH. The catalysed reaction is oxaloacetate + H(+) = pyruvate + CO2. It participates in photosynthesis; C4 acid pathway. Its function is as follows. The chloroplastic ME isoform decarboxylates malate shuttled from neighboring mesophyll cells. The CO(2) released is then refixed by ribulose-bisphosphate carboxylase. This pathway eliminates the photorespiratory loss of CO(2) that occurs in most plants. The sequence is that of NADP-dependent malic enzyme, chloroplastic (MOD1) from Zea mays (Maize).